The sequence spans 150 residues: Large ribosomal subunit protein bL9 (150 aa).

Belongs to the bacterial ribosomal protein bL9 family.

In terms of biological role, binds to the 23S rRNA. The chain is Large ribosomal subunit protein bL9 from Clavibacter sepedonicus (Clavibacter michiganensis subsp. sepedonicus).